The sequence spans 347 residues: GMP reductase (347 aa).

Residue 108-131 coordinates NADP(+); it reads ADFDKMKQILALSPALKFICIDVA. Gly181 and Gly183 together coordinate K(+). The Thioimidate intermediate role is filled by Cys186. 216 to 239 contributes to the NADP(+) binding site; the sequence is IVSDGGCSVPGDVAKAFGGGADFV.

Belongs to the IMPDH/GMPR family. GuaC type 1 subfamily. Homotetramer.

It catalyses the reaction IMP + NH4(+) + NADP(+) = GMP + NADPH + 2 H(+). In terms of biological role, catalyzes the irreversible NADPH-dependent deamination of GMP to IMP. It functions in the conversion of nucleobase, nucleoside and nucleotide derivatives of G to A nucleotides, and in maintaining the intracellular balance of A and G nucleotides. In Yersinia enterocolitica serotype O:8 / biotype 1B (strain NCTC 13174 / 8081), this protein is GMP reductase.